We begin with the raw amino-acid sequence, 162 residues long: Putative ethylene-responsive transcription factor ERF121 (162 aa).

Disordered regions lie at residues 1-21, 84-103, and 139-162; these read MDYS…PPNL, IKQE…KWSA, and KRSA…GGDD. Residues 87 to 98 show a composition bias toward basic residues; sequence EKKHKGVRKKPS. The AP2/ERF DNA-binding region spans 89-146; that stretch reads KHKGVRKKPSGKWSAEIWDPSTRTRRWLGTFPTAEMAADAYDEAAAALVEKRSARRGS.

The protein belongs to the AP2/ERF transcription factor family. ERF subfamily.

The protein localises to the nucleus. Its function is as follows. Probably acts as a transcriptional activator. Binds to the GCC-box pathogenesis-related promoter element. May be involved in the regulation of gene expression by stress factors and by components of stress signal transduction pathways. This chain is Putative ethylene-responsive transcription factor ERF121 (ERF121), found in Arabidopsis thaliana (Mouse-ear cress).